The following is a 174-amino-acid chain: Methionine-R-sulfoxide reductase B2, mitochondrial (174 aa).

A mitochondrion-targeting transit peptide spans methionine 1 to lysine 61. The MsrB domain occupies glycine 62 to serine 172. Residues cysteine 82, cysteine 85, cysteine 138, and cysteine 141 each coordinate Zn(2+). Cysteine 161 (nucleophile) is an active-site residue.

The protein belongs to the MsrB Met sulfoxide reductase family. The cofactor is Zn(2+).

The protein localises to the mitochondrion. It carries out the reaction L-methionyl-[protein] + [thioredoxin]-disulfide + H2O = L-methionyl-(R)-S-oxide-[protein] + [thioredoxin]-dithiol. It catalyses the reaction [thioredoxin]-disulfide + L-methionine + H2O = L-methionine (R)-S-oxide + [thioredoxin]-dithiol. Functionally, methionine-sulfoxide reductase that specifically reduces methionine (R)-sulfoxide back to methionine. While in many cases, methionine oxidation is the result of random oxidation following oxidative stress, methionine oxidation is also a post-translational modification that takes place on specific residue. Upon oxidative stress, may play a role in the preservation of mitochondrial integrity by decreasing the intracellular reactive oxygen species build-up through its scavenging role, hence contributing to cell survival and protein maintenance. This Rattus norvegicus (Rat) protein is Methionine-R-sulfoxide reductase B2, mitochondrial (Msrb2).